The chain runs to 460 residues: A-type ATP synthase subunit B (460 aa).

This sequence belongs to the ATPase alpha/beta chains family. In terms of assembly, has multiple subunits with at least A(3), B(3), C, D, E, F, H, I and proteolipid K(x).

It is found in the cell membrane. In terms of biological role, component of the A-type ATP synthase that produces ATP from ADP in the presence of a proton gradient across the membrane. The B chain is a regulatory subunit. This chain is A-type ATP synthase subunit B, found in Methanosarcina barkeri.